Here is a 72-residue protein sequence, read N- to C-terminus: Translation initiation factor IF-1 (72 aa).

In terms of domain architecture, S1-like spans 1-72 (MAKEDNIEMQ…SKGRIVFRSR (72 aa)).

This sequence belongs to the IF-1 family. Component of the 30S ribosomal translation pre-initiation complex which assembles on the 30S ribosome in the order IF-2 and IF-3, IF-1 and N-formylmethionyl-tRNA(fMet); mRNA recruitment can occur at any time during PIC assembly.

Its subcellular location is the cytoplasm. In terms of biological role, one of the essential components for the initiation of protein synthesis. Stabilizes the binding of IF-2 and IF-3 on the 30S subunit to which N-formylmethionyl-tRNA(fMet) subsequently binds. Helps modulate mRNA selection, yielding the 30S pre-initiation complex (PIC). Upon addition of the 50S ribosomal subunit IF-1, IF-2 and IF-3 are released leaving the mature 70S translation initiation complex. The chain is Translation initiation factor IF-1 from Klebsiella pneumoniae subsp. pneumoniae (strain ATCC 700721 / MGH 78578).